A 212-amino-acid chain; its full sequence is Peptide methionine sulfoxide reductase MsrA (212 aa).

Residue Cys52 is part of the active site.

It belongs to the MsrA Met sulfoxide reductase family.

It catalyses the reaction L-methionyl-[protein] + [thioredoxin]-disulfide + H2O = L-methionyl-(S)-S-oxide-[protein] + [thioredoxin]-dithiol. The catalysed reaction is [thioredoxin]-disulfide + L-methionine + H2O = L-methionine (S)-S-oxide + [thioredoxin]-dithiol. Has an important function as a repair enzyme for proteins that have been inactivated by oxidation. Catalyzes the reversible oxidation-reduction of methionine sulfoxide in proteins to methionine. This Salmonella choleraesuis (strain SC-B67) protein is Peptide methionine sulfoxide reductase MsrA.